The following is a 433-amino-acid chain: FAD-dependent monooxygenase notI (433 aa).

FAD is bound by residues glutamate 45 and arginine 117. Residue arginine 195 is part of the active site. Aspartate 314 and alanine 327 together coordinate FAD.

It belongs to the paxM FAD-dependent monooxygenase family. FAD serves as cofactor.

Its pathway is alkaloid biosynthesis. FAD-dependent monooxygenase; part of the gene cluster that mediates the biosynthesis of notoamide, a fungal indole alkaloid that belongs to a family of natural products containing a characteristic bicyclo[2.2.2]diazaoctane core. The first step of notoamide biosynthesis involves coupling of L-proline and L-tryptophan by the bimodular NRPS notE, to produce cyclo-L-tryptophan-L-proline called brevianamide F. The reverse prenyltransferase notF then acts as a deoxybrevianamide E synthase and converts brevianamide F to deoxybrevianamide E via reverse prenylation at C-2 of the indole ring leading to the bicyclo[2.2.2]diazaoctane core. Deoxybrevianamide E is further hydroxylated at C-6 of the indole ring, likely catalyzed by the cytochrome P450 monooxygenase notG, to yield 6-hydroxy-deoxybrevianamide E. 6-hydroxy-deoxybrevianamide E is a specific substrate of the prenyltransferase notC for normal prenylation at C-7 to produce 6-hydroxy-7-prenyl-deoxybrevianamide, also called notoamide S. As the proposed pivotal branching point in notoamide biosynthesis, notoamide S can be diverted to notoamide E through an oxidative pyran ring closure putatively catalyzed by either notH cytochrome P450 monooxygenase or the notD FAD-linked oxidoreductase. This step would be followed by an indole 2,3-epoxidation-initiated pinacol-like rearrangement catalyzed by the notB FAD-dependent monooxygenase leading to the formation of notoamide C and notoamide D. On the other hand notoamide S is converted to notoamide T by notH (or notD), a bifunctional oxidase that also functions as the intramolecular Diels-Alderase responsible for generation of (+)-notoamide T. To generate antipodal (-)-notoaminide T, notH' (or notD') in Aspergillus versicolor is expected to catalyze a Diels-Alder reaction leading to the opposite stereochemistry. The remaining oxidoreductase notD (or notH) likely catalyzes the oxidative pyran ring formation to yield (+)-stephacidin A. The FAD-dependent monooxygenase notI is highly similar to notB and is predicted to catalyze a similar conversion from (+)-stephacidin A to (-)-notoamide B via the 2,3-epoxidation of (+)-stephacidin A followed by a pinacol-type rearrangement. Finally, it remains unclear which enzyme could be responsible for the final hydroxylation steps leading to notoamide A and sclerotiamide. The protein is FAD-dependent monooxygenase notI of Aspergillus sp. (strain MF297-2).